The chain runs to 291 residues: Pantothenate synthetase (291 aa).

30–37 contributes to the ATP binding site; that stretch reads MGYLHVGH. Histidine 37 (proton donor) is an active-site residue. Position 61 (glutamine 61) interacts with (R)-pantoate. Glutamine 61 lines the beta-alanine pocket. Position 147–150 (147–150) interacts with ATP; that stretch reads GEKD. Residue glutamine 153 coordinates (R)-pantoate. Residues valine 176 and 184-187 contribute to the ATP site; that span reads CSSR.

This sequence belongs to the pantothenate synthetase family. In terms of assembly, homodimer.

The protein localises to the cytoplasm. The enzyme catalyses (R)-pantoate + beta-alanine + ATP = (R)-pantothenate + AMP + diphosphate + H(+). It participates in cofactor biosynthesis; (R)-pantothenate biosynthesis; (R)-pantothenate from (R)-pantoate and beta-alanine: step 1/1. In terms of biological role, catalyzes the condensation of pantoate with beta-alanine in an ATP-dependent reaction via a pantoyl-adenylate intermediate. The sequence is that of Pantothenate synthetase from Sinorhizobium medicae (strain WSM419) (Ensifer medicae).